The chain runs to 132 residues: Small ribosomal subunit protein uS8 (132 aa).

Belongs to the universal ribosomal protein uS8 family. Part of the 30S ribosomal subunit. Contacts proteins S5 and S12.

One of the primary rRNA binding proteins, it binds directly to 16S rRNA central domain where it helps coordinate assembly of the platform of the 30S subunit. The sequence is that of Small ribosomal subunit protein uS8 from Borreliella afzelii (strain PKo) (Borrelia afzelii).